We begin with the raw amino-acid sequence, 447 residues long: Vasoactive intestinal polypeptide receptor (447 aa).

Topologically, residues 1 to 103 (MCDVVNEIEL…VDDDSFFRSV (103 aa)) are extracellular. 3 cysteine pairs are disulfide-bonded: cysteine 15–cysteine 36, cysteine 27–cysteine 69, and cysteine 50–cysteine 86. N-linked (GlcNAc...) asparagine glycosylation is found at asparagine 17, asparagine 22, asparagine 64, and asparagine 91. Residues 104–128 (KIGYTIGHSVSLISLTTAIVILCMS) form a helical membrane-spanning segment. At 129–135 (RKLHCTR) the chain is on the cytoplasmic side. The helical transmembrane segment at 136–155 (NYIHMHLFVSFILKAIAVFV) threads the bilayer. Over 156 to 178 (KDAVLYDVIQESDNCSTASVGCK) the chain is Extracellular. Asparagine 169 is a glycosylation site (N-linked (GlcNAc...) asparagine). Cysteine 177 and cysteine 247 are joined by a disulfide. Residues 179 to 202 (AVIVFFQYCIMASFFWLLVEGLYL) traverse the membrane as a helical segment. Topologically, residues 203-216 (HALLAVSFFSERKY) are cytoplasmic. A helical membrane pass occupies residues 217-238 (FWWYILIGWGGPTIFIMAWSFA). The Extracellular segment spans residues 239–256 (KAYFNDVGCWDIIENSDL). Residues 257 to 280 (FWWIIKTPILASILMNFILFICII) form a helical membrane-spanning segment. At 281 to 305 (RILRQKINCPDIGRNESNQYSRLAK) the chain is on the cytoplasmic side. Residues 306–325 (STLLLIPLFGINFIIFAFIP) form a helical membrane-spanning segment. The Extracellular segment spans residues 326-337 (ENIKTELRLVFD). A helical membrane pass occupies residues 338-357 (LILGSFQGFVVAVLYCFLNG). Residues 358–447 (EVQAEIKRKW…KGHEDVREVS (90 aa)) lie on the Cytoplasmic side of the membrane.

This sequence belongs to the G-protein coupled receptor 2 family.

It is found in the cell membrane. Functionally, this is a receptor for VIP. The activity of this receptor is mediated by G proteins which activate adenylyl cyclase. In Carassius auratus (Goldfish), this protein is Vasoactive intestinal polypeptide receptor (vipr1).